A 160-amino-acid polypeptide reads, in one-letter code: Nucleotide-binding protein VP1617 (160 aa).

Belongs to the YajQ family.

Functionally, nucleotide-binding protein. This is Nucleotide-binding protein VP1617 from Vibrio parahaemolyticus serotype O3:K6 (strain RIMD 2210633).